Reading from the N-terminus, the 295-residue chain is Pyridoxal 5'-phosphate synthase subunit PdxS (295 aa).

D-ribose 5-phosphate is bound at residue Asp-25. The Schiff-base intermediate with D-ribose 5-phosphate role is filled by Lys-82. Gly-154 is a D-ribose 5-phosphate binding site. Arg-166 provides a ligand contact to D-glyceraldehyde 3-phosphate. D-ribose 5-phosphate is bound by residues Gly-215 and 236–237; that span reads GS.

This sequence belongs to the PdxS/SNZ family. In terms of assembly, in the presence of PdxT, forms a dodecamer of heterodimers.

The catalysed reaction is aldehydo-D-ribose 5-phosphate + D-glyceraldehyde 3-phosphate + L-glutamine = pyridoxal 5'-phosphate + L-glutamate + phosphate + 3 H2O + H(+). Its pathway is cofactor biosynthesis; pyridoxal 5'-phosphate biosynthesis. Its function is as follows. Catalyzes the formation of pyridoxal 5'-phosphate from ribose 5-phosphate (RBP), glyceraldehyde 3-phosphate (G3P) and ammonia. The ammonia is provided by the PdxT subunit. Can also use ribulose 5-phosphate and dihydroxyacetone phosphate as substrates, resulting from enzyme-catalyzed isomerization of RBP and G3P, respectively. In Bacillus cereus (strain Q1), this protein is Pyridoxal 5'-phosphate synthase subunit PdxS.